The chain runs to 159 residues: Transcription elongation factor GreA (159 aa).

Residues 7–72 (MTVRGAEKLR…IQEIESKLSN (66 aa)) are a coiled coil.

It belongs to the GreA/GreB family.

Its function is as follows. Necessary for efficient RNA polymerase transcription elongation past template-encoded arresting sites. The arresting sites in DNA have the property of trapping a certain fraction of elongating RNA polymerases that pass through, resulting in locked ternary complexes. Cleavage of the nascent transcript by cleavage factors such as GreA or GreB allows the resumption of elongation from the new 3'terminus. GreA releases sequences of 2 to 3 nucleotides. The polypeptide is Transcription elongation factor GreA (Buchnera aphidicola subsp. Schizaphis graminum (strain Sg)).